Reading from the N-terminus, the 430-residue chain is Serine--tRNA ligase (430 aa).

An L-serine-binding site is contributed by 234-236 (TAE). 265–267 (RRE) is a binding site for ATP. L-serine is bound at residue E288. Residue 352-355 (EISS) participates in ATP binding. S388 is an L-serine binding site.

Belongs to the class-II aminoacyl-tRNA synthetase family. Type-1 seryl-tRNA synthetase subfamily. As to quaternary structure, homodimer. The tRNA molecule binds across the dimer.

The protein localises to the cytoplasm. It catalyses the reaction tRNA(Ser) + L-serine + ATP = L-seryl-tRNA(Ser) + AMP + diphosphate + H(+). The catalysed reaction is tRNA(Sec) + L-serine + ATP = L-seryl-tRNA(Sec) + AMP + diphosphate + H(+). Its pathway is aminoacyl-tRNA biosynthesis; selenocysteinyl-tRNA(Sec) biosynthesis; L-seryl-tRNA(Sec) from L-serine and tRNA(Sec): step 1/1. In terms of biological role, catalyzes the attachment of serine to tRNA(Ser). Is also able to aminoacylate tRNA(Sec) with serine, to form the misacylated tRNA L-seryl-tRNA(Sec), which will be further converted into selenocysteinyl-tRNA(Sec). The protein is Serine--tRNA ligase of Thermosynechococcus vestitus (strain NIES-2133 / IAM M-273 / BP-1).